Reading from the N-terminus, the 303-residue chain is Oxygen-dependent coproporphyrinogen-III oxidase (303 aa).

Ser-94 is a binding site for substrate. The a divalent metal cation site is built by His-98 and His-108. The active-site Proton donor is His-108. 110–112 contributes to the substrate binding site; that stretch reads NVR. Residues His-147 and His-177 each contribute to the a divalent metal cation site. Residues 242-277 form an important for dimerization region; sequence YVEFNLVYDRGTLFGLQTGGRTESILMSLPPLVRWE. 260-262 contacts substrate; sequence GGR.

Belongs to the aerobic coproporphyrinogen-III oxidase family. Homodimer. The cofactor is a divalent metal cation.

Its subcellular location is the cytoplasm. The catalysed reaction is coproporphyrinogen III + O2 + 2 H(+) = protoporphyrinogen IX + 2 CO2 + 2 H2O. It functions in the pathway porphyrin-containing compound metabolism; protoporphyrin-IX biosynthesis; protoporphyrinogen-IX from coproporphyrinogen-III (O2 route): step 1/1. Its function is as follows. Involved in the heme biosynthesis. Catalyzes the aerobic oxidative decarboxylation of propionate groups of rings A and B of coproporphyrinogen-III to yield the vinyl groups in protoporphyrinogen-IX. In Saccharophagus degradans (strain 2-40 / ATCC 43961 / DSM 17024), this protein is Oxygen-dependent coproporphyrinogen-III oxidase.